The following is a 156-amino-acid chain: Small ribosomal subunit protein uS7 (156 aa).

The protein belongs to the universal ribosomal protein uS7 family. In terms of assembly, part of the 30S ribosomal subunit. Contacts proteins S9 and S11.

Its function is as follows. One of the primary rRNA binding proteins, it binds directly to 16S rRNA where it nucleates assembly of the head domain of the 30S subunit. Is located at the subunit interface close to the decoding center, probably blocks exit of the E-site tRNA. In Shewanella loihica (strain ATCC BAA-1088 / PV-4), this protein is Small ribosomal subunit protein uS7.